Consider the following 302-residue polypeptide: UDP-N-acetylenolpyruvoylglucosamine reductase (302 aa).

One can recognise an FAD-binding PCMH-type domain in the interval 32-195 (LGGPADLLAR…VTVTLELVPD (164 aa)). Arginine 175 is a catalytic residue. Catalysis depends on serine 224, which acts as the Proton donor. The active site involves glutamate 294.

Belongs to the MurB family. FAD serves as cofactor.

It localises to the cytoplasm. The enzyme catalyses UDP-N-acetyl-alpha-D-muramate + NADP(+) = UDP-N-acetyl-3-O-(1-carboxyvinyl)-alpha-D-glucosamine + NADPH + H(+). It functions in the pathway cell wall biogenesis; peptidoglycan biosynthesis. In terms of biological role, cell wall formation. This Moorella thermoacetica (strain ATCC 39073 / JCM 9320) protein is UDP-N-acetylenolpyruvoylglucosamine reductase.